The chain runs to 174 residues: Guided entry of tail-anchored proteins factor 1 (174 aa).

The Lumenal portion of the chain corresponds to 1-8; the sequence is MSASETDR. The chain crosses the membrane as a helical span at residues 9 to 29; that stretch reads WAWLLVLSFVFGCNLLRILLP. Topologically, residues 30–99 are cytoplasmic; it reads SLSSFISRVL…VKARTAQLAK (70 aa). Residues 39–94 adopt a coiled-coil conformation; that stretch reads LQKDAEQESQMRAEIQGMKQELSTVNMMDEFARYARLERKINKMTDKLKTHVKART. The interval 39 to 97 is interaction with GET3/TRC40; that stretch reads LQKDAEQESQMRAEIQGMKQELSTVNMMDEFARYARLERKINKMTDKLKTHVKARTAQL. The helical transmembrane segment at 100–120 threads the bilayer; that stretch reads IKWFISVAFYILQAALMISLI. Residues 121 to 148 lie on the Lumenal side of the membrane; that stretch reads WKYYSVPVAVVPSKWITPLDRLVAFPTR. The chain crosses the membrane as a helical span at residues 149-169; it reads VAGGIGITCWILVCNKVVAIV. At 170–174 the chain is on the cytoplasmic side; sequence LHPFS.

Belongs to the WRB/GET1 family. Component of the Golgi to ER traffic (GET) complex, which is composed of GET1, CAMLG/GET2 and GET3. Within the complex, GET1 and CAMLG form a heterotetramer which is stabilized by phosphatidylinositol binding and which binds to the GET3 homodimer. Interacts with CAMLG/GET2 (via C-terminus). GET3 shows a higher affinity for CAMLG than for GET1.

It is found in the endoplasmic reticulum membrane. Functionally, required for the post-translational delivery of tail-anchored (TA) proteins to the endoplasmic reticulum. Together with CAMLG/GET2, acts as a membrane receptor for soluble GET3/TRC40, which recognizes and selectively binds the transmembrane domain of TA proteins in the cytosol. Required to ensure correct topology and ER insertion of CAMLG. The protein is Guided entry of tail-anchored proteins factor 1 of Mus musculus (Mouse).